The chain runs to 398 residues: 1-deoxy-D-xylulose 5-phosphate reductoisomerase (398 aa).

7 residues coordinate NADPH: threonine 11, glycine 12, serine 13, isoleucine 14, arginine 38, asparagine 39, and asparagine 125. Lysine 126 serves as a coordination point for 1-deoxy-D-xylulose 5-phosphate. Glutamate 127 contributes to the NADPH binding site. A Mn(2+)-binding site is contributed by aspartate 151. 1-deoxy-D-xylulose 5-phosphate is bound by residues serine 152, glutamate 153, serine 179, and histidine 202. Glutamate 153 lines the Mn(2+) pocket. Glycine 208 lines the NADPH pocket. The 1-deoxy-D-xylulose 5-phosphate site is built by serine 215, asparagine 220, lysine 221, and glutamate 224. Glutamate 224 lines the Mn(2+) pocket.

Belongs to the DXR family. Requires Mg(2+) as cofactor. The cofactor is Mn(2+).

It catalyses the reaction 2-C-methyl-D-erythritol 4-phosphate + NADP(+) = 1-deoxy-D-xylulose 5-phosphate + NADPH + H(+). It functions in the pathway isoprenoid biosynthesis; isopentenyl diphosphate biosynthesis via DXP pathway; isopentenyl diphosphate from 1-deoxy-D-xylulose 5-phosphate: step 1/6. Functionally, catalyzes the NADPH-dependent rearrangement and reduction of 1-deoxy-D-xylulose-5-phosphate (DXP) to 2-C-methyl-D-erythritol 4-phosphate (MEP). In Burkholderia pseudomallei (strain 1106a), this protein is 1-deoxy-D-xylulose 5-phosphate reductoisomerase.